We begin with the raw amino-acid sequence, 275 residues long: Membrane protein insertase YidC (275 aa).

An N-terminal signal peptide occupies residues M1 to A22. The N-palmitoyl cysteine moiety is linked to residue C23. The S-diacylglycerol cysteine moiety is linked to residue C23. Transmembrane regions (helical) follow at residues L53–L73, Y127–I147, Y169–M189, and P206–V226. Residues E249–K266 are compositionally biased toward basic and acidic residues. The disordered stretch occupies residues E249–K275.

It belongs to the OXA1/ALB3/YidC family. Type 2 subfamily.

The protein localises to the cell membrane. In terms of biological role, required for the insertion and/or proper folding and/or complex formation of integral membrane proteins into the membrane. Involved in integration of membrane proteins that insert both dependently and independently of the Sec translocase complex, as well as at least some lipoproteins. This chain is Membrane protein insertase YidC, found in Enterococcus faecalis (strain ATCC 700802 / V583).